Consider the following 476-residue polypeptide: Bifunctional protein HldE (476 aa).

A ribokinase region spans residues 1 to 318 (MKPILPDYNN…AEAIHGSRDT (318 aa)). An ATP-binding site is contributed by 195 to 198 (NMSE). Residue Asp264 is part of the active site. The tract at residues 344–476 (MTNGCFDILH…IIDAIKGGRG (133 aa)) is cytidylyltransferase.

It in the N-terminal section; belongs to the carbohydrate kinase PfkB family. This sequence in the C-terminal section; belongs to the cytidylyltransferase family. Homodimer.

The enzyme catalyses D-glycero-beta-D-manno-heptose 7-phosphate + ATP = D-glycero-beta-D-manno-heptose 1,7-bisphosphate + ADP + H(+). It carries out the reaction D-glycero-beta-D-manno-heptose 1-phosphate + ATP + H(+) = ADP-D-glycero-beta-D-manno-heptose + diphosphate. It participates in nucleotide-sugar biosynthesis; ADP-L-glycero-beta-D-manno-heptose biosynthesis; ADP-L-glycero-beta-D-manno-heptose from D-glycero-beta-D-manno-heptose 7-phosphate: step 1/4. The protein operates within nucleotide-sugar biosynthesis; ADP-L-glycero-beta-D-manno-heptose biosynthesis; ADP-L-glycero-beta-D-manno-heptose from D-glycero-beta-D-manno-heptose 7-phosphate: step 3/4. It functions in the pathway bacterial outer membrane biogenesis; LPS core biosynthesis. Its function is as follows. Catalyzes the phosphorylation of D-glycero-D-manno-heptose 7-phosphate at the C-1 position to selectively form D-glycero-beta-D-manno-heptose-1,7-bisphosphate. Functionally, catalyzes the ADP transfer from ATP to D-glycero-beta-D-manno-heptose 1-phosphate, yielding ADP-D-glycero-beta-D-manno-heptose. This is Bifunctional protein HldE from Vibrio vulnificus (strain CMCP6).